The primary structure comprises 410 residues: Tryptophan synthase beta chain (410 aa).

Lys-98 bears the N6-(pyridoxal phosphate)lysine mark.

The protein belongs to the TrpB family. Tetramer of two alpha and two beta chains. Pyridoxal 5'-phosphate is required as a cofactor.

The catalysed reaction is (1S,2R)-1-C-(indol-3-yl)glycerol 3-phosphate + L-serine = D-glyceraldehyde 3-phosphate + L-tryptophan + H2O. It participates in amino-acid biosynthesis; L-tryptophan biosynthesis; L-tryptophan from chorismate: step 5/5. Its function is as follows. The beta subunit is responsible for the synthesis of L-tryptophan from indole and L-serine. This chain is Tryptophan synthase beta chain, found in Roseobacter denitrificans (strain ATCC 33942 / OCh 114) (Erythrobacter sp. (strain OCh 114)).